The chain runs to 310 residues: Thioredoxin reductase (310 aa).

34–41 (NGMQPGGQ) contributes to the FAD binding site. Residues cysteine 135 and cysteine 138 are joined by a disulfide bond. 281–290 (DVQDKIYRQA) is a binding site for FAD.

It belongs to the class-II pyridine nucleotide-disulfide oxidoreductase family. In terms of assembly, homodimer. It depends on FAD as a cofactor.

It localises to the cytoplasm. The enzyme catalyses [thioredoxin]-dithiol + NADP(+) = [thioredoxin]-disulfide + NADPH + H(+). The sequence is that of Thioredoxin reductase (trxB) from Rickettsia prowazekii (strain Madrid E).